The sequence spans 164 residues: Peptidyl-prolyl cis-trans isomerase A-like 4F (164 aa).

In terms of domain architecture, PPIase cyclophilin-type spans 7 to 163 (FFEITRDGKP…KKITIADCGQ (157 aa)).

It belongs to the cyclophilin-type PPIase family. PPIase A subfamily.

The protein localises to the cytoplasm. It catalyses the reaction [protein]-peptidylproline (omega=180) = [protein]-peptidylproline (omega=0). Its function is as follows. PPIases accelerate the folding of proteins. It catalyzes the cis-trans isomerization of proline imidic peptide bonds in oligopeptides. The protein is Peptidyl-prolyl cis-trans isomerase A-like 4F of Homo sapiens (Human).